The chain runs to 277 residues: Shikimate dehydrogenase (NADP(+)) (277 aa).

Shikimate contacts are provided by residues 15–17 (SLS) and T62. The active-site Proton acceptor is K66. The shikimate site is built by N87 and D102. Residues 127-131 (GAGGA), 151-156 (NRTVDK), and I219 each bind NADP(+). Residue Y221 coordinates shikimate. G242 provides a ligand contact to NADP(+).

It belongs to the shikimate dehydrogenase family. As to quaternary structure, homodimer.

It catalyses the reaction shikimate + NADP(+) = 3-dehydroshikimate + NADPH + H(+). It participates in metabolic intermediate biosynthesis; chorismate biosynthesis; chorismate from D-erythrose 4-phosphate and phosphoenolpyruvate: step 4/7. Functionally, involved in the biosynthesis of the chorismate, which leads to the biosynthesis of aromatic amino acids. Catalyzes the reversible NADPH linked reduction of 3-dehydroshikimate (DHSA) to yield shikimate (SA). This Bacillus thuringiensis subsp. konkukian (strain 97-27) protein is Shikimate dehydrogenase (NADP(+)).